The following is an 82-amino-acid chain: MVKIRLSRFGSTHNPHYRIVVTDSRRPRDGGYIENLGHYDPRKTTENYLKINAERAAYWLSVGAQPTQTARRLLKAQGVKVA.

The protein belongs to the bacterial ribosomal protein bS16 family.

This Deinococcus geothermalis (strain DSM 11300 / CIP 105573 / AG-3a) protein is Small ribosomal subunit protein bS16.